We begin with the raw amino-acid sequence, 121 residues long: uncharacterized protein (121 aa).

A helical transmembrane segment spans residues 11 to 31 (IFQFFVFPFYYFLLIITEIGF).

It is found in the membrane. This is an uncharacterized protein from Schizosaccharomyces pombe (strain 972 / ATCC 24843) (Fission yeast).